A 98-amino-acid chain; its full sequence is NADH-ubiquinone oxidoreductase chain 4L (98 aa).

3 consecutive transmembrane segments (helical) span residues 1–21 (MSMV…GLLM), 29–49 (SLLC…VTIL), and 61–81 (IILL…LVMV).

The protein belongs to the complex I subunit 4L family. In terms of assembly, core subunit of respiratory chain NADH dehydrogenase (Complex I) which is composed of 45 different subunits.

The protein resides in the mitochondrion inner membrane. The enzyme catalyses a ubiquinone + NADH + 5 H(+)(in) = a ubiquinol + NAD(+) + 4 H(+)(out). Its function is as follows. Core subunit of the mitochondrial membrane respiratory chain NADH dehydrogenase (Complex I) which catalyzes electron transfer from NADH through the respiratory chain, using ubiquinone as an electron acceptor. Part of the enzyme membrane arm which is embedded in the lipid bilayer and involved in proton translocation. The protein is NADH-ubiquinone oxidoreductase chain 4L (MT-ND4L) of Callorhinus ursinus (Northern fur seal).